The chain runs to 485 residues: Adenosylhomocysteinase (485 aa).

The substrate site is built by threonine 64, aspartate 139, and glutamate 205. 206-208 (TTT) lines the NAD(+) pocket. Lysine 235 and aspartate 239 together coordinate substrate. NAD(+) is bound by residues asparagine 240, 269–274 (GYGDVG), glutamate 292, asparagine 327, 348–350 (IGH), and asparagine 397.

It belongs to the adenosylhomocysteinase family. NAD(+) is required as a cofactor.

It catalyses the reaction S-adenosyl-L-homocysteine + H2O = L-homocysteine + adenosine. Its pathway is amino-acid biosynthesis; L-homocysteine biosynthesis; L-homocysteine from S-adenosyl-L-homocysteine: step 1/1. Its function is as follows. Adenosylhomocysteine is a competitive inhibitor of S-adenosyl-L-methionine-dependent methyl transferase reactions; therefore adenosylhomocysteinase may play a key role in the control of methylations via regulation of the intracellular concentration of adenosylhomocysteine. The sequence is that of Adenosylhomocysteinase (SAHH) from Nicotiana sylvestris (Wood tobacco).